We begin with the raw amino-acid sequence, 182 residues long: WUSCHEL-related homeobox 5 (182 aa).

Residues 1 to 24 are disordered; that stretch reads MSFSVKGRSLRGNNNGGTGTKCGR. Positions 20–84 form a DNA-binding region, homeobox; WUS-type; it reads TKCGRWNPTV…NHKARERQKR (65 aa).

It belongs to the WUS homeobox family. As to expression, specifically expressed in the central cells of a quiescent center (QC) of the root.

Its subcellular location is the nucleus. Its function is as follows. Transcription factor, which may be involved in the specification and maintenance of the stem cells (QC cells) in the root apical meristem (RAM). This chain is WUSCHEL-related homeobox 5 (WOX5), found in Arabidopsis thaliana (Mouse-ear cress).